A 56-amino-acid polypeptide reads, in one-letter code: Prokaryotic ubiquitin-like protein UBact (56 aa).

Basic and acidic residues predominate over residues M1–K28. Residues M1–I33 are disordered. The residue at position 56 (Q56) is a Deamidated glutamine. An Isoglutamyl lysine isopeptide (Gln-Lys) (interchain with K-? in acceptor proteins) cross-link involves residue Q56.

Belongs to the ubiquitin-like protein UBact family. In terms of processing, may be modified by deamidation of its C-terminal glutamine to glutamate by the adjacently encoded deamidase. This could be a prerequisite to the subsequent conjugation, as shown in the other prokaryotic ubiquitin-like protein Pup.

In terms of biological role, may function as a protein modifier covalently attached to lysine residues of substrate proteins. This may serve to target the modified proteins for degradation by proteasomes. This is Prokaryotic ubiquitin-like protein UBact from Yanofskybacteria sp. (strain GW2011_GWA1_39_13).